We begin with the raw amino-acid sequence, 377 residues long: Geranylgeranyl transferase type-1 subunit beta (377 aa).

PFTB repeat units lie at residues 144–186, 193–234, 245–284, and 291–333; these read KEAC…YMLN, MKKA…CLMG, LNRIKRWCIMRQQNGYHGRPNKPVDTCYSFWVGATLKLLK, and FEKN…SLME. Geranylgeranyl diphosphate is bound by residues 219 to 221 and 263 to 266; these read HGG and RPNK. Residues Asp269 and Cys271 each contribute to the Zn(2+) site. 272 to 275 provides a ligand contact to geranylgeranyl diphosphate; it reads YSFW. His321 contacts Zn(2+).

Belongs to the protein prenyltransferase subunit beta family. Heterodimer of FNTA and PGGT1B. PGGT1B mediates interaction with substrate peptides. It depends on Zn(2+) as a cofactor. The cofactor is Mg(2+).

The enzyme catalyses geranylgeranyl diphosphate + L-cysteinyl-[protein] = S-geranylgeranyl-L-cysteinyl-[protein] + diphosphate. Functionally, catalyzes the transfer of a geranylgeranyl moiety from geranylgeranyl diphosphate to a cysteine at the fourth position from the C-terminus of proteins with the C-terminal sequence Cys-aliphatic-aliphatic-X. Known substrates include RAC1, RAC2, RAP1A and RAP1B. This chain is Geranylgeranyl transferase type-1 subunit beta (Pggt1b), found in Rattus norvegicus (Rat).